Consider the following 343-residue polypeptide: Ribosomal RNA small subunit methyltransferase C (343 aa).

This sequence belongs to the methyltransferase superfamily. RsmC family. In terms of assembly, monomer.

The protein resides in the cytoplasm. The catalysed reaction is guanosine(1207) in 16S rRNA + S-adenosyl-L-methionine = N(2)-methylguanosine(1207) in 16S rRNA + S-adenosyl-L-homocysteine + H(+). In terms of biological role, specifically methylates the guanine in position 1207 of 16S rRNA in the 30S particle. The sequence is that of Ribosomal RNA small subunit methyltransferase C from Escherichia coli (strain K12 / DH10B).